The following is a 139-amino-acid chain: Transcription antitermination protein NusB (139 aa).

Belongs to the NusB family.

Involved in transcription antitermination. Required for transcription of ribosomal RNA (rRNA) genes. Binds specifically to the boxA antiterminator sequence of the ribosomal RNA (rrn) operons. The sequence is that of Transcription antitermination protein NusB from Escherichia coli (strain K12 / MC4100 / BW2952).